A 173-amino-acid polypeptide reads, in one-letter code: Fimbrial protein PrsE (173 aa).

The first 24 residues, 1 to 24, serve as a signal peptide directing secretion; that stretch reads MKKIRGLCLPVMLGAVLMSQHVHA.

It is found in the secreted. It localises to the fimbrium. In terms of biological role, fimbriae (also called pili), polar filaments radiating from the surface of the bacterium to a length of 0.5-1.5 micrometers and numbering 100-300 per cell, enable bacteria to colonize the epithelium of specific host organs. The polypeptide is Fimbrial protein PrsE (prsE) (Escherichia coli).